Here is a 119-residue protein sequence, read N- to C-terminus: Large ribosomal subunit protein bL20 (119 aa).

The protein belongs to the bacterial ribosomal protein bL20 family.

Functionally, binds directly to 23S ribosomal RNA and is necessary for the in vitro assembly process of the 50S ribosomal subunit. It is not involved in the protein synthesizing functions of that subunit. The chain is Large ribosomal subunit protein bL20 from Chloroflexus aurantiacus (strain ATCC 29366 / DSM 635 / J-10-fl).